The chain runs to 96 residues: Co-chaperonin GroES (96 aa).

The protein belongs to the GroES chaperonin family. Heptamer of 7 subunits arranged in a ring. Interacts with the chaperonin GroEL.

Its subcellular location is the cytoplasm. Functionally, together with the chaperonin GroEL, plays an essential role in assisting protein folding. The GroEL-GroES system forms a nano-cage that allows encapsulation of the non-native substrate proteins and provides a physical environment optimized to promote and accelerate protein folding. GroES binds to the apical surface of the GroEL ring, thereby capping the opening of the GroEL channel. In Polynucleobacter necessarius subsp. necessarius (strain STIR1), this protein is Co-chaperonin GroES.